We begin with the raw amino-acid sequence, 279 residues long: uncharacterized protein (279 aa).

A disordered region spans residues 136–279 (TSNATEASEK…FTSDSSDEED (144 aa)). Over residues 228 to 238 (NNGNGAVYSDS) the composition is skewed to low complexity.

This is an uncharacterized protein from Invertebrate iridescent virus 3 (IIV-3).